The sequence spans 115 residues: Large ribosomal subunit protein bL20 (115 aa).

This sequence belongs to the bacterial ribosomal protein bL20 family.

Binds directly to 23S ribosomal RNA and is necessary for the in vitro assembly process of the 50S ribosomal subunit. It is not involved in the protein synthesizing functions of that subunit. In Prochlorococcus marinus (strain MIT 9313), this protein is Large ribosomal subunit protein bL20.